Reading from the N-terminus, the 1350-residue chain is Nicotinate hydroxylase hnxS (1350 aa).

[2Fe-2S] cluster is bound by residues Cys-49, Cys-54, Cys-89, Cys-92, Cys-133, and Cys-135. A disordered region spans residues 164–193 (LVGTEEETESDMGAHSGSGDTGSRSSGSCG). A compositionally biased stretch (low complexity) spans 180–192 (GSGDTGSRSSGSC). The FAD-binding PCMH-type domain occupies 256–445 (YGDAEQAWVK…TKIAVPMPSK (190 aa)). Residues 284 to 291 (LVTGASEV), 379 to 383 (CLAGN), Asp-392, and Lys-455 each bind FAD. Gln-793 and Phe-824 together coordinate Mo-molybdopterin. Glu-828 and Arg-906 together coordinate substrate. Positions 938 and 1107 each coordinate Mo-molybdopterin. Glu-1281 functions as the Proton acceptor in the catalytic mechanism.

It belongs to the xanthine dehydrogenase family. The cofactor is [2Fe-2S] cluster. It depends on FAD as a cofactor. Mo-molybdopterin is required as a cofactor.

Allopurinol inhibits catalytic activity in a linear fashion. In terms of biological role, nicotinate hydroxylase, part of the hnx cluster involved in the purine degradation. The nicotinate hydroxylase hnxS accepts nicotinate as a substrate and catalyzes the first step of nicotinate catabolism. HnxS also accepts hypoxanthine, but not xanthine, as a substrate. The major facilitator-type transporters hxnP and hxnZ are probably involved in the uptake of nicotinate-derived metabolites, and the oxidoreductases hxnT and hxnY in the further metabolism of 6-OH nicotinic acid. The protein is Nicotinate hydroxylase hnxS of Emericella nidulans (strain FGSC A4 / ATCC 38163 / CBS 112.46 / NRRL 194 / M139) (Aspergillus nidulans).